We begin with the raw amino-acid sequence, 20 residues long: Fibrinogen beta chain (20 aa).

The segment at 1-20 (ATDYEDEEFPGAVPPSVGAR) is disordered. An O-linked (GalNAc...) threonine glycan is attached at Thr2. Tyr4 is modified (sulfotyrosine).

Heterohexamer; disulfide linked. Contains 2 sets of 3 non-identical chains (alpha, beta and gamma). The 2 heterotrimers are in head to head conformation with the N-termini in a small central domain. Conversion of fibrinogen to fibrin is triggered by thrombin, which cleaves fibrinopeptides A and B from alpha and beta chains, and thus exposes the N-terminal polymerization sites responsible for the formation of the soft clot.

The protein localises to the secreted. In terms of biological role, cleaved by the protease thrombin to yield monomers which, together with fibrinogen alpha (FGA) and fibrinogen gamma (FGG), polymerize to form an insoluble fibrin matrix. Fibrin has a major function in hemostasis as one of the primary components of blood clots. In addition, functions during the early stages of wound repair to stabilize the lesion and guide cell migration during re-epithelialization. Was originally thought to be essential for platelet aggregation, based on in vitro studies using anticoagulated blood. However subsequent studies have shown that it is not absolutely required for thrombus formation in vivo. Enhances expression of SELP in activated platelets. Maternal fibrinogen is essential for successful pregnancy. Fibrin deposition is also associated with infection, where it protects against IFNG-mediated hemorrhage. May also facilitate the antibacterial immune response via both innate and T-cell mediated pathways. The sequence is that of Fibrinogen beta chain (FGB) from Elephas maximus (Indian elephant).